A 299-amino-acid polypeptide reads, in one-letter code: Acarbose 7(IV)-phosphotransferase (299 aa).

This sequence belongs to the carbohydrate kinase PfkB family.

The enzyme catalyses acarbose + ATP = acarbose 7(IV)-phosphate + ADP + H(+). Catalyzes the phosphorylation of the alpha-glucosidase inhibitor acarbose. Phosphorylation of acarbose could be a resistance-like self-protection mechanism. In Actinoplanes sp. (strain ATCC 31044 / CBS 674.73 / SE50/110), this protein is Acarbose 7(IV)-phosphotransferase.